Consider the following 100-residue polypeptide: DNA-binding protein HU (100 aa).

The protein belongs to the bacterial histone-like protein family.

Histone-like DNA-binding protein which is capable of wrapping DNA to stabilize it, and thus to prevent its denaturation under extreme environmental conditions. This chain is DNA-binding protein HU (hup), found in Synechocystis sp. (strain ATCC 27184 / PCC 6803 / Kazusa).